A 459-amino-acid chain; its full sequence is Phosphomethylpyrimidine synthase (459 aa).

Substrate contacts are provided by residues N80, M109, Y139, H175, 195–197, 236–239, and E275; these read SRG and DSLR. H279 serves as a coordination point for Zn(2+). Y302 provides a ligand contact to substrate. H343 is a Zn(2+) binding site. Residues C423, C426, and C431 each coordinate [4Fe-4S] cluster.

It belongs to the ThiC family. It depends on [4Fe-4S] cluster as a cofactor.

The enzyme catalyses 5-amino-1-(5-phospho-beta-D-ribosyl)imidazole + S-adenosyl-L-methionine = 4-amino-2-methyl-5-(phosphooxymethyl)pyrimidine + CO + 5'-deoxyadenosine + formate + L-methionine + 3 H(+). The protein operates within cofactor biosynthesis; thiamine diphosphate biosynthesis. Its function is as follows. Catalyzes the synthesis of the hydroxymethylpyrimidine phosphate (HMP-P) moiety of thiamine from aminoimidazole ribotide (AIR) in a radical S-adenosyl-L-methionine (SAM)-dependent reaction. This is Phosphomethylpyrimidine synthase from Prochlorococcus marinus (strain MIT 9303).